Here is a 354-residue protein sequence, read N- to C-terminus: NADH-quinone oxidoreductase subunit H (354 aa).

The next 8 membrane-spanning stretches (helical) occupy residues 25 to 45, 91 to 111, 126 to 146, 170 to 190, 205 to 225, 267 to 287, 290 to 310, and 330 to 350; these read LVRI…LILW, WIYL…WAVI, LLYA…AGWA, MGFA…SGIV, FLSW…ISGI, IVIS…PFGF, FVPG…VFIW, and IFIP…MSPL.

Belongs to the complex I subunit 1 family. As to quaternary structure, NDH-1 is composed of 14 different subunits. Subunits NuoA, H, J, K, L, M, N constitute the membrane sector of the complex.

Its subcellular location is the cell inner membrane. It catalyses the reaction a quinone + NADH + 5 H(+)(in) = a quinol + NAD(+) + 4 H(+)(out). Its function is as follows. NDH-1 shuttles electrons from NADH, via FMN and iron-sulfur (Fe-S) centers, to quinones in the respiratory chain. The immediate electron acceptor for the enzyme in this species is believed to be ubiquinone. Couples the redox reaction to proton translocation (for every two electrons transferred, four hydrogen ions are translocated across the cytoplasmic membrane), and thus conserves the redox energy in a proton gradient. This subunit may bind ubiquinone. The protein is NADH-quinone oxidoreductase subunit H of Paraburkholderia phytofirmans (strain DSM 17436 / LMG 22146 / PsJN) (Burkholderia phytofirmans).